Here is an 88-residue protein sequence, read N- to C-terminus: Small ribosomal subunit protein bS16 (88 aa).

It belongs to the bacterial ribosomal protein bS16 family.

The protein is Small ribosomal subunit protein bS16 of Geobacter sulfurreducens (strain ATCC 51573 / DSM 12127 / PCA).